A 376-amino-acid polypeptide reads, in one-letter code: tRNA-specific 2-thiouridylase MnmA (376 aa).

ATP contacts are provided by residues 10 to 17 and M36; that span reads GMSGGVDS. The interaction with target base in tRNA stretch occupies residues 96–98; sequence NPD. The active-site Nucleophile is the C101. A disulfide bridge connects residues C101 and C198. G125 provides a ligand contact to ATP. Residues 148-150 form an interaction with tRNA region; sequence KDQ. The active-site Cysteine persulfide intermediate is the C198. An interaction with tRNA region spans residues 305–306; the sequence is RY.

It belongs to the MnmA/TRMU family.

It localises to the cytoplasm. The enzyme catalyses S-sulfanyl-L-cysteinyl-[protein] + uridine(34) in tRNA + AH2 + ATP = 2-thiouridine(34) in tRNA + L-cysteinyl-[protein] + A + AMP + diphosphate + H(+). Catalyzes the 2-thiolation of uridine at the wobble position (U34) of tRNA, leading to the formation of s(2)U34. This chain is tRNA-specific 2-thiouridylase MnmA, found in Protochlamydia amoebophila (strain UWE25).